The primary structure comprises 372 residues: F-box/kelch-repeat protein At5g48990 (372 aa).

One can recognise an F-box domain in the interval 14 to 60; sequence SSPNPSLPEDLIVSILARVSRSYYTNLSVVSKTFRSILTSPELYKTR. One copy of the Kelch repeat lies at 176–222; it reads RTYFPGSSEKPDSLNCVEVYNTNTQTWNPVPPQKRKLKFGNMEGKIY.

The chain is F-box/kelch-repeat protein At5g48990 from Arabidopsis thaliana (Mouse-ear cress).